A 131-amino-acid chain; its full sequence is uncharacterized protein (131 aa).

The interval 99–131 is disordered; it reads NAIQEEEIDMEQQEEKEEKPREKGKKKSVEEEF. A compositionally biased stretch (acidic residues) spans 102-113; sequence QEEEIDMEQQEE. Residues 114 to 131 show a composition bias toward basic and acidic residues; it reads KEEKPREKGKKKSVEEEF.

This is an uncharacterized protein from Sulfolobus islandicus rod-shaped virus 1 (SIRV-1).